A 61-amino-acid chain; its full sequence is Small ribosomal subunit protein uS14 (61 aa).

Zn(2+) contacts are provided by C24, C27, C40, and C43.

This sequence belongs to the universal ribosomal protein uS14 family. Zinc-binding uS14 subfamily. As to quaternary structure, part of the 30S ribosomal subunit. Contacts proteins S3 and S10. It depends on Zn(2+) as a cofactor.

Its function is as follows. Binds 16S rRNA, required for the assembly of 30S particles and may also be responsible for determining the conformation of the 16S rRNA at the A site. In Rhodococcus erythropolis (strain PR4 / NBRC 100887), this protein is Small ribosomal subunit protein uS14.